The following is a 498-amino-acid chain: ATP synthase subunit beta, chloroplastic (498 aa).

Residue 172-179 (GGAGVGKT) participates in ATP binding.

This sequence belongs to the ATPase alpha/beta chains family. F-type ATPases have 2 components, CF(1) - the catalytic core - and CF(0) - the membrane proton channel. CF(1) has five subunits: alpha(3), beta(3), gamma(1), delta(1), epsilon(1). CF(0) has four main subunits: a(1), b(1), b'(1) and c(9-12).

It is found in the plastid. The protein resides in the chloroplast thylakoid membrane. It catalyses the reaction ATP + H2O + 4 H(+)(in) = ADP + phosphate + 5 H(+)(out). Produces ATP from ADP in the presence of a proton gradient across the membrane. The catalytic sites are hosted primarily by the beta subunits. The sequence is that of ATP synthase subunit beta, chloroplastic from Saruma henryi (Upright wild ginger).